The following is a 417-amino-acid chain: Imidazolonepropionase (417 aa).

Residues histidine 80 and histidine 82 each coordinate Fe(3+). Histidine 80 and histidine 82 together coordinate Zn(2+). Arginine 89, tyrosine 152, and histidine 187 together coordinate 4-imidazolone-5-propanoate. Residue tyrosine 152 coordinates N-formimidoyl-L-glutamate. A Fe(3+)-binding site is contributed by histidine 252. Zn(2+) is bound at residue histidine 252. Glutamate 255 lines the 4-imidazolone-5-propanoate pocket. Residue aspartate 326 participates in Fe(3+) binding. Aspartate 326 serves as a coordination point for Zn(2+). Residues asparagine 328 and glycine 330 each coordinate N-formimidoyl-L-glutamate. Serine 331 is a 4-imidazolone-5-propanoate binding site.

Belongs to the metallo-dependent hydrolases superfamily. HutI family. Zn(2+) is required as a cofactor. Fe(3+) serves as cofactor.

Its subcellular location is the cytoplasm. It carries out the reaction 4-imidazolone-5-propanoate + H2O = N-formimidoyl-L-glutamate. The protein operates within amino-acid degradation; L-histidine degradation into L-glutamate; N-formimidoyl-L-glutamate from L-histidine: step 3/3. Functionally, catalyzes the hydrolytic cleavage of the carbon-nitrogen bond in imidazolone-5-propanoate to yield N-formimidoyl-L-glutamate. It is the third step in the universal histidine degradation pathway. This chain is Imidazolonepropionase, found in Bacteroides thetaiotaomicron (strain ATCC 29148 / DSM 2079 / JCM 5827 / CCUG 10774 / NCTC 10582 / VPI-5482 / E50).